The sequence spans 590 residues: MEHTVKQNKTIACDVLVVGSGAAGMAAALKAASQGLSVIVAEKEQYFGGTTAISAGWAWVPGNRVGTAAGDTREEVETYLKNLAPDTYNADGVAQFLDTVPEALDFFERETDVEFVYPEKAPDYQMDLPGARLGGRAILPKDTDARILGDKRLLMQPYMSSYTVFGYMPQVGPDINEFFHVNQSVKSFVYVAKKLLRTWFDAARYRRPVLRSNGNALMTLMVKSAYDAGVRMWKSSPVLELTRGDDGAVTGAVTGGEHPARVEAKLGVILAAGGFSGNTELRKKYFPHDAAGDDHFTPTVGHGGDAATMTLAAGGRIDDAVSSVGSWAPVTVFRFRDGRQRLFPHLRAIGLPGLIAVDRHGKRFGNEALSYHDFGGRMIAHNAGEDKTFGWVIADEKTMHKYGIGYAKPWPMPRGYFYKMGYLVKGNTLEELADRIGVDAAGLTQTVAEFNVGARAGEDPAFGRGSTEYNHFRGDMEHKPNPNLAPLDKGPYYAAKIQMGDLGTFAGIAVDSDNLVVTEEGTPIPGLLAVGAAARSVFGGGYPGYGSHIGAALVFGYRAGRDVARLASARENGRGIGRPASASVAEEAAR.

Belongs to the FAD-dependent oxidoreductase 2 family. As to quaternary structure, forms multimers. Requires FAD as cofactor.

The catalysed reaction is 4-oxocyclohex-2-ene-1-carboxylate + NAD(+) = 4-oxocyclohexa-2,5-diene-1-carboxylate + NADH + H(+). Functionally, desaturase involved in a cyclohexanecarboxylate (CHCA) degradation pathway. Probably catalyzes the conversion of 4-oxocyclohexenecarboxylate to 4-oxocyclohex-2,5-dienecarboxylate, which is spontaneously isomerized to 4-hydroxybenzoate (4-HBA). This chain is 4-oxocyclohex-2-ene-1-carboxylate 5-dehydrogenase, found in Sinomonas cyclohexanicum (Corynebacterium cyclohexanicum).